We begin with the raw amino-acid sequence, 764 residues long: FAST kinase domain-containing protein 5, mitochondrial (764 aa).

S95 is subject to Phosphoserine. The residue at position 507 (K507) is an N6-acetyllysine. In terms of domain architecture, RAP spans 697–757; that stretch reads LAIQFTNRNQ…RLEKLAFLHE (61 aa).

This sequence belongs to the FAST kinase family. In terms of assembly, found in a complex with GRSF1, DDX28, DHX30 and FASTKD2. Associates with the 12S mitochondrial rRNA (12S mt-rRNA).

The protein resides in the mitochondrion matrix. It localises to the mitochondrion nucleoid. Plays an important role in the processing of non-canonical mitochondrial mRNA precursors. In Macaca fascicularis (Crab-eating macaque), this protein is FAST kinase domain-containing protein 5, mitochondrial (FASTKD5).